We begin with the raw amino-acid sequence, 144 residues long: Maximins 3/H2 (144 aa).

The N-terminal stretch at Met1 to Ala18 is a signal peptide. 2 propeptides span residues Arg19–Arg43 and Thr74–Arg123. Ile143 carries the post-translational modification Isoleucine amide.

Belongs to the bombinin family. Expressed by the skin glands.

It localises to the secreted. In terms of biological role, maximin-3 shows antibacterial activity against both Gram-positive and Gram-negative bacteria. It also shows antimicrobial activity against the fungus C.albicans, but not against A.flavus nor P.uticale. It has little hemolytic activity. It possess a significant cytotoxicity against tumor cell lines. It possess a significant anti-HIV activity. It shows high spermicidal activity. Its function is as follows. Maximin-H2 shows antibacterial activity against both Gram-positive and Gram-negative bacteria. It also shows antimicrobial activity against the fungus C.albicans. Shows strong hemolytic activity. The protein is Maximins 3/H2 of Bombina maxima (Giant fire-bellied toad).